The chain runs to 102 residues: Large ribosomal subunit protein bL21 (102 aa).

The protein belongs to the bacterial ribosomal protein bL21 family. As to quaternary structure, part of the 50S ribosomal subunit. Contacts protein L20.

This protein binds to 23S rRNA in the presence of protein L20. This chain is Large ribosomal subunit protein bL21, found in Latilactobacillus sakei subsp. sakei (strain 23K) (Lactobacillus sakei subsp. sakei).